The chain runs to 245 residues: tRNA pseudouridine synthase A (245 aa).

The Nucleophile role is filled by Asp52. Tyr111 is a binding site for substrate.

The protein belongs to the tRNA pseudouridine synthase TruA family. In terms of assembly, homodimer.

The enzyme catalyses uridine(38/39/40) in tRNA = pseudouridine(38/39/40) in tRNA. In terms of biological role, formation of pseudouridine at positions 38, 39 and 40 in the anticodon stem and loop of transfer RNAs. The polypeptide is tRNA pseudouridine synthase A (Rickettsia canadensis (strain McKiel)).